Reading from the N-terminus, the 782-residue chain is Protein VAC14 homolog (782 aa).

M1 carries the N-acetylmethionine modification. HEAT repeat units follow at residues 5–42, 89–126, 171–208, and 212–249; these read KDFA…EFVA, LYLK…VARG, FDLV…VPDI, and DYLP…EIKK. Phosphothreonine is present on T11. Disordered stretches follow at residues 335-372 and 471-517; these read EDDE…DGSC and SSPA…LECS. The stretch at 438–475 is one HEAT 5 repeat; sequence RHTDSLFPILLQTLSDESDEVILKDLEVLAEIASSPAG. Over residues 478–488 the composition is skewed to low complexity; the sequence is DDPGPLDGPDL. T499 is subject to Phosphothreonine. The span at 506 to 517 shows a compositional bias: polar residues; it reads LNTSGTKGLECS. S517 is modified (phosphoserine). One copy of the HEAT 6 repeat lies at 560–598; the sequence is LNAENIFHSMADILLREEDLKFASTMVHALNTILLTSTE. Residue S743 is modified to Phosphoserine. Residues 773 to 777 are mediates interaction with the PDZ domain of NOS1; it reads GDHLD.

It belongs to the VAC14 family. In terms of assembly, forms pentamers. Component of the PI(3,5)P2 regulatory complex/PAS complex, at least composed of PIKFYVE, FIG4 and VAC14. VAC14 nucleates the assembly of the complex and serves as a scaffold by pentamerizing into a star-shaped structure, which can bind a single copy each of PIKFYVE and FIG4 and coordinates their activities. Interacts with NOS1. As to quaternary structure, (Microbial infection) Interacts with HTLV-1 Tax. Ubiquitously expressed.

It is found in the endosome membrane. It localises to the microsome membrane. Functionally, scaffold protein component of the PI(3,5)P2 regulatory complex which regulates both the synthesis and turnover of phosphatidylinositol 3,5-bisphosphate (PtdIns(3,5)P2). Pentamerizes into a star-shaped structure and nucleates the assembly of the complex. The pentamer binds a single copy each of PIKFYVE and FIG4 and coordinates both PIKfyve kinase activity and FIG4 phosphatase activity, being required to maintain normal levels of phosphatidylinositol 3-phosphate (PtdIns(3)P) and phosphatidylinositol 5-phosphate (PtdIns(5)P). Plays a role in the biogenesis of endosome carrier vesicles (ECV) / multivesicular bodies (MVB) transport intermediates from early endosomes. The sequence is that of Protein VAC14 homolog (VAC14) from Homo sapiens (Human).